The following is a 346-amino-acid chain: tRNA N6-adenosine threonylcarbamoyltransferase (346 aa).

Positions 111 and 115 each coordinate Fe cation. Substrate is bound by residues L134–G138, D167, G180, and N279. D307 contacts Fe cation.

Belongs to the KAE1 / TsaD family. The cofactor is Fe(2+).

The protein resides in the cytoplasm. It catalyses the reaction L-threonylcarbamoyladenylate + adenosine(37) in tRNA = N(6)-L-threonylcarbamoyladenosine(37) in tRNA + AMP + H(+). Functionally, required for the formation of a threonylcarbamoyl group on adenosine at position 37 (t(6)A37) in tRNAs that read codons beginning with adenine. Is involved in the transfer of the threonylcarbamoyl moiety of threonylcarbamoyl-AMP (TC-AMP) to the N6 group of A37, together with TsaE and TsaB. TsaD likely plays a direct catalytic role in this reaction. The sequence is that of tRNA N6-adenosine threonylcarbamoyltransferase from Burkholderia ambifaria (strain MC40-6).